A 327-amino-acid polypeptide reads, in one-letter code: DNA-directed RNA polymerase subunit alpha (327 aa).

The interval 1 to 233 is alpha N-terminal domain (alpha-NTD); sequence MQNSASEFLK…DQLSIFADLQ (233 aa). The alpha C-terminal domain (alpha-CTD) stretch occupies residues 247 to 327; sequence VDPILLRPVD…NWPPAGLEKP (81 aa).

The protein belongs to the RNA polymerase alpha chain family. In terms of assembly, homodimer. The RNAP catalytic core consists of 2 alpha, 1 beta, 1 beta' and 1 omega subunit. When a sigma factor is associated with the core the holoenzyme is formed, which can initiate transcription.

The enzyme catalyses RNA(n) + a ribonucleoside 5'-triphosphate = RNA(n+1) + diphosphate. Its function is as follows. DNA-dependent RNA polymerase catalyzes the transcription of DNA into RNA using the four ribonucleoside triphosphates as substrates. This chain is DNA-directed RNA polymerase subunit alpha, found in Laribacter hongkongensis (strain HLHK9).